A 214-amino-acid chain; its full sequence is Glycerol-3-phosphate acyltransferase (214 aa).

5 helical membrane-spanning segments follow: residues 4 to 24 (LIVA…IVSA), 52 to 72 (AAIL…WFVV), 82 to 102 (ETSV…PVFF), 118 to 138 (LAIN…VAFF), and 159 to 179 (FLFG…LLVW).

It belongs to the PlsY family. As to quaternary structure, probably interacts with PlsX.

Its subcellular location is the cell inner membrane. It carries out the reaction an acyl phosphate + sn-glycerol 3-phosphate = a 1-acyl-sn-glycero-3-phosphate + phosphate. Its pathway is lipid metabolism; phospholipid metabolism. In terms of biological role, catalyzes the transfer of an acyl group from acyl-phosphate (acyl-PO(4)) to glycerol-3-phosphate (G3P) to form lysophosphatidic acid (LPA). This enzyme utilizes acyl-phosphate as fatty acyl donor, but not acyl-CoA or acyl-ACP. This chain is Glycerol-3-phosphate acyltransferase, found in Paraburkholderia phytofirmans (strain DSM 17436 / LMG 22146 / PsJN) (Burkholderia phytofirmans).